The following is a 166-amino-acid chain: Glutamyl-tRNA(Gln) amidotransferase subunit C, mitochondrial (166 aa).

A mitochondrion-targeting transit peptide spans 1-44 (MIRGWTIFTLCKPSALVGSSHFNKQFNWAKSQLQFATKVPQQPY).

Belongs to the GatC family. In terms of assembly, subunit of the heterotrimeric GatCAB amidotransferase (AdT) complex, composed of A, B and C subunits.

It localises to the mitochondrion. The enzyme catalyses L-glutamyl-tRNA(Gln) + L-glutamine + ATP + H2O = L-glutaminyl-tRNA(Gln) + L-glutamate + ADP + phosphate + H(+). Its function is as follows. Allows the formation of correctly charged Gln-tRNA(Gln) through the transamidation of misacylated Glu-tRNA(Gln) in the mitochondria. The reaction takes place in the presence of glutamine and ATP through an activated gamma-phospho-Glu-tRNA(Gln). This chain is Glutamyl-tRNA(Gln) amidotransferase subunit C, mitochondrial, found in Anopheles darlingi (Mosquito).